Here is a 92-residue protein sequence, read N- to C-terminus: Long neurotoxin 77 (92 aa).

A signal peptide spans M1–S21. Disulfide bonds link C24–C41, C34–C62, C47–C51, C66–C77, and C78–C83.

Belongs to the three-finger toxin family. Long-chain subfamily. Type II alpha-neurotoxin sub-subfamily. Expressed by the venom gland.

Its subcellular location is the secreted. Functionally, binds with high affinity to muscular (alpha-1/CHRNA1) and neuronal (alpha-7/CHRNA7) nicotinic acetylcholine receptor (nAChR) and inhibits acetylcholine from binding to the receptor, thereby impairing neuromuscular and neuronal transmission. This is Long neurotoxin 77 from Drysdalia coronoides (White-lipped snake).